We begin with the raw amino-acid sequence, 342 residues long: DNA-directed RNA polymerase subunit alpha (342 aa).

The segment at 1-239 is alpha N-terminal domain (alpha-NTD); the sequence is MTTFLAKNWS…DQLQVFINFQ (239 aa). The alpha C-terminal domain (alpha-CTD) stretch occupies residues 254–342; the sequence is INPVLLKKVY…SLAKKHEDQY (89 aa).

It belongs to the RNA polymerase alpha chain family. As to quaternary structure, homodimer. The RNAP catalytic core consists of 2 alpha, 1 beta, 1 beta' and 1 omega subunit. When a sigma factor is associated with the core the holoenzyme is formed, which can initiate transcription.

The enzyme catalyses RNA(n) + a ribonucleoside 5'-triphosphate = RNA(n+1) + diphosphate. Functionally, DNA-dependent RNA polymerase catalyzes the transcription of DNA into RNA using the four ribonucleoside triphosphates as substrates. In Orientia tsutsugamushi (strain Boryong) (Rickettsia tsutsugamushi), this protein is DNA-directed RNA polymerase subunit alpha.